A 75-amino-acid polypeptide reads, in one-letter code: UPF0270 protein Pfl01_4103 (75 aa).

Belongs to the UPF0270 family.

The sequence is that of UPF0270 protein Pfl01_4103 from Pseudomonas fluorescens (strain Pf0-1).